Here is a 92-residue protein sequence, read N- to C-terminus: Small ribosomal subunit protein uS19c (92 aa).

It belongs to the universal ribosomal protein uS19 family.

The protein localises to the plastid. It localises to the chloroplast. Protein S19 forms a complex with S13 that binds strongly to the 16S ribosomal RNA. The chain is Small ribosomal subunit protein uS19c from Daucus carota (Wild carrot).